A 502-amino-acid chain; its full sequence is MSDHEQAQAQSQDENQIMAERRQKLQAIREKGIAYPNDFKRSHFAKPLQDDHAAKEAEALEAEKIEVAVAGRMMLKRVMGKASFATLQDVSGRIQAFISRDNVGEDVYADFKRWDLGDIVAVKGMLFKTKTGELTVQATEVRMLSKNIRPLPEKFHGIADQETKYRQRYADLIMSEESRETFIKRSKIVQKVRDVMVGEGYLEVETPMMHPIPGGASAKPFVTHHNALDMPLYLRIAPELYLKRLVVGGLERVFEINRNFRNEGMSTRHNPEFTMIEFYEAYSDYQRMMEMTETIIRECALVACGSTTVTYQGKEVDLGKPFDRFTIVQAIKHYNPQYTDAQLSDAAWVASEIKRLGGKLPPAPGLGSLQLALFEECAESLLWNPTFIIDYPVEVSPLARGSDTQPGLTERFELFIVGREHANGYSELNDPEDQAARFQAQVAQKDAGDDEAMHYDADYIRAMEYGLPPTGGCGIGIDRLVMLLTDAPSIRDVILFPHMRPE.

The disordered stretch occupies residues 1-22; the sequence is MSDHEQAQAQSQDENQIMAERR. Mg(2+) contacts are provided by E413 and E420.

It belongs to the class-II aminoacyl-tRNA synthetase family. In terms of assembly, homodimer. Mg(2+) serves as cofactor.

The protein localises to the cytoplasm. The enzyme catalyses tRNA(Lys) + L-lysine + ATP = L-lysyl-tRNA(Lys) + AMP + diphosphate. This is Lysine--tRNA ligase from Chromobacterium violaceum (strain ATCC 12472 / DSM 30191 / JCM 1249 / CCUG 213 / NBRC 12614 / NCIMB 9131 / NCTC 9757 / MK).